The following is a 191-amino-acid chain: MESNNNEKKKVARQSSSFRLRSPSLNALRLQRIFDLFDKNGDGFITVEELSQALTRLGLNADLSDLKSTVESYIQPGNTGLNFDDFSSLHKTLDDSFFGGACGGGENEDDPSSAAENESDLAEAFKVFDENGDGFISARELQTVLKKLGLPEGGEMERVEKMIVSVDRNQDGRVDFFEFKNMMRTVVIPSS.

3 EF-hand domains span residues 25-60 (LNAL…LGLN), 116-151 (ENES…LGLP), and 154-189 (GEME…VVIP). Residues Asp38, Asn40, Asp42, Glu49, Asp129, Asn131, Asp133, Glu140, Asp167, Asn169, Asp171, Arg173, and Glu178 each contribute to the Ca(2+) site.

Interacts with KIC. In terms of tissue distribution, expressed in seedling shoots, roots, rosette leaves and flowers. Expressed in the leaf trichome support cells.

In terms of biological role, probable calcium sensor that binds calcium in vitro. Involved in the regulation of trichome branching. This chain is Calcium-binding protein CML42 (CML42), found in Arabidopsis thaliana (Mouse-ear cress).